A 189-amino-acid chain; its full sequence is Blue copper protein (189 aa).

The signal sequence occupies residues 1-24; that stretch reads MAFSNALVLCFLLAIINMALPSLA. The Phytocyanin domain maps to 25–124; it reads TVYTVGDTSG…GMKLSIKVKA (100 aa). Residues H65, C106, and H111 each contribute to the Cu cation site. Cysteines 78 and 106 form a disulfide. A compositionally biased stretch (low complexity) spans 127 to 160; sequence GSSAAPSATPSSSGKGSPSSDDTPAATTTTTTPT. Residues 127-165 are disordered; that stretch reads GSSAAPSATPSSSGKGSPSSDDTPAATTTTTTPTKQNES. An N-linked (GlcNAc...) asparagine glycan is attached at N163.

This is Blue copper protein from Pisum sativum (Garden pea).